Here is a 342-residue protein sequence, read N- to C-terminus: Fatty acid desaturase 6 (342 aa).

2 helical membrane passes run 39–59 and 63–83; these read GVDC…FLCL and NILA…TLTV. A Histidine box-1 motif is present at residues 87-91; that stretch reads HLATH. The helical transmembrane segment at 100-120 threads the bilayer; the sequence is WSKILMIFFLEVCTAFSAEFA. The Histidine box-2 motif lies at 124–128; that stretch reads HVNLH. 2 consecutive transmembrane segments (helical) span residues 151–171 and 185–205; these read YVYM…VALE and LGFI…VSGF. Residues 277–281 carry the Histidine box-3 motif; it reads HVEHH.

This sequence belongs to the fatty acid desaturase type 1 family.

It is found in the membrane. It participates in lipid metabolism; fatty acid metabolism. This Mus musculus (Mouse) protein is Fatty acid desaturase 6 (Fads6).